The following is a 114-amino-acid chain: ATP synthase subunit c (114 aa).

2 consecutive transmembrane segments (helical) span residues Ala-31 to Gly-51 and Ile-88 to Phe-108.

It belongs to the ATPase C chain family. F-type ATPases have 2 components, F(1) - the catalytic core - and F(0) - the membrane proton channel. F(1) has five subunits: alpha(3), beta(3), gamma(1), delta(1), epsilon(1). F(0) has three main subunits: a(1), b(2) and c(10-14). The alpha and beta chains form an alternating ring which encloses part of the gamma chain. F(1) is attached to F(0) by a central stalk formed by the gamma and epsilon chains, while a peripheral stalk is formed by the delta and b chains.

Its subcellular location is the cell inner membrane. Functionally, f(1)F(0) ATP synthase produces ATP from ADP in the presence of a proton or sodium gradient. F-type ATPases consist of two structural domains, F(1) containing the extramembraneous catalytic core and F(0) containing the membrane proton channel, linked together by a central stalk and a peripheral stalk. During catalysis, ATP synthesis in the catalytic domain of F(1) is coupled via a rotary mechanism of the central stalk subunits to proton translocation. Its function is as follows. Key component of the F(0) channel; it plays a direct role in translocation across the membrane. A homomeric c-ring of between 10-14 subunits forms the central stalk rotor element with the F(1) delta and epsilon subunits. This Sulfurihydrogenibium sp. (strain YO3AOP1) protein is ATP synthase subunit c.